Consider the following 383-residue polypeptide: Plant intracellular Ras-group-related LRR protein 8 (383 aa).

LRR repeat units lie at residues 56–79, 80–102, 104–126, 127–149, 151–173, 174–197, 199–219, 221–244, 245–268, and 270–290; these read RQNI…SINL, ASIS…LVAR, LNLW…IGCL, SKLK…IEDC, SLEE…GFEL, TNLT…SYLT, LRVL…LENL, NLQV…VGLL, ISLV…GCLR, and IQKL…VVEQ. The GVYW; degenerate signature appears at 291-298; that stretch reads GLEALKQY.

This sequence belongs to the SHOC2 family. Widely expressed except flowers.

In terms of biological role, leucine-rich repeat protein that likely mediates protein interactions, possibly in the context of signal transduction. The protein is Plant intracellular Ras-group-related LRR protein 8 (PIRL8) of Arabidopsis thaliana (Mouse-ear cress).